The chain runs to 378 residues: O-methyltransferase gsfD (378 aa).

S-adenosyl-L-methionine-binding positions include 219–220 (GG), Asp244, 266–267 (DM), and Arg282. His286 acts as the Proton acceptor in catalysis.

It belongs to the class I-like SAM-binding methyltransferase superfamily. Cation-independent O-methyltransferase family.

It catalyses the reaction desmethyl-dehydrogriseofulvin + S-adenosyl-L-methionine = dehydrogriseofulvin + S-adenosyl-L-homocysteine + H(+). The protein operates within secondary metabolite biosynthesis; terpenoid biosynthesis. Its function is as follows. O-methyltransferase; part of the gene cluster that mediates the biosynthesis of griseofulvin, an important antifungal drug that has been in use for a long time for treating dermatophyte infections. The first step of the pathway is the formation of the heptaketide backbone by gsfA which is initiated by priming with acetyl-CoA, followed by sequential condensations of 6 malonyl-CoA units. The resulting benzophenone can undergo a spontaneous dehydration to form norlichexanthone. However, the true precursor for the griseofulvin biosynthesis is not norlichexanthone, but the heptaketide benzophenone that is O-methylated at 3-OH by gsfB to produce griseophenone D which is further methylated at 9-OH by gsfC to yield griseophenone C. Griseophenone C is then substrate of halogenase gsfI which is responsible for the regio-specific chlorination at the C13 position to form griseophenone B. The cytochrome P450 gsfF catalyzes the coupling of orcinol and phloroglucinol rings in griseophenone B to form desmethyl-dehydrogriseofulvin A which is further methylated at 5-OH by gsfD to yield dehydrogriseofulvin. Finally, gsfE performs stereospecific reduction of enone 18 of dehydrogriseofulvin to afford the final product griseofulvin. This Penicillium aethiopicum protein is O-methyltransferase gsfD.